The sequence spans 121 residues: Large ribosomal subunit protein eL18 (121 aa).

The protein belongs to the eukaryotic ribosomal protein eL18 family.

The polypeptide is Large ribosomal subunit protein eL18 (Methanothermobacter thermautotrophicus (strain ATCC 29096 / DSM 1053 / JCM 10044 / NBRC 100330 / Delta H) (Methanobacterium thermoautotrophicum)).